The chain runs to 69 residues: Beta-defensin 11 (69 aa).

Positions 1-23 (MRTLCSLLLIGCLLFSYDTPVVG) are cleaved as a signal peptide. Intrachain disulfides connect Cys-35–Cys-64, Cys-42–Cys-57, and Cys-47–Cys-65.

It belongs to the beta-defensin family.

Its subcellular location is the secreted. Its function is as follows. Has antibacterial activity. The protein is Beta-defensin 11 (Defb11) of Rattus norvegicus (Rat).